The sequence spans 202 residues: LexA repressor 1 (202 aa).

The segment at residues arginine 28–lysine 48 is a DNA-binding region (H-T-H motif). Active-site for autocatalytic cleavage activity residues include serine 123 and lysine 160.

Belongs to the peptidase S24 family. Homodimer.

It catalyses the reaction Hydrolysis of Ala-|-Gly bond in repressor LexA.. Its function is as follows. Represses a number of genes involved in the response to DNA damage (SOS response), including recA and lexA. In the presence of single-stranded DNA, RecA interacts with LexA causing an autocatalytic cleavage which disrupts the DNA-binding part of LexA, leading to derepression of the SOS regulon and eventually DNA repair. The polypeptide is LexA repressor 1 (Pseudomonas syringae pv. tomato (strain ATCC BAA-871 / DC3000)).